The sequence spans 139 residues: Putative general secretion pathway protein B (139 aa).

A helical membrane pass occupies residues 28-48 (IIYVICLLLICLWFAGMVLVG). Residues 93 to 139 (VEEEDDPGVAVENAPSSSEDEENTVEESEEKAGLRERVKNALNELER) form a disordered region. The span at 110–121 (SEDEENTVEESE) shows a compositional bias: acidic residues. A compositionally biased stretch (basic and acidic residues) spans 122–139 (EKAGLRERVKNALNELER).

The protein resides in the cell membrane. Its function is as follows. Part of a cryptic operon that encodes proteins involved in type II secretion pathway in other organisms, but is not expressed in strain K12 under standard laboratory conditions. May play a regulatory role under conditions of derepressed gsp gene expression. The chain is Putative general secretion pathway protein B from Escherichia coli (strain K12).